The primary structure comprises 185 residues: Hypoxanthine/guanine phosphoribosyltransferase (185 aa).

The protein belongs to the purine/pyrimidine phosphoribosyltransferase family. Archaeal HPRT subfamily. Homodimer.

Its subcellular location is the cytoplasm. The enzyme catalyses IMP + diphosphate = hypoxanthine + 5-phospho-alpha-D-ribose 1-diphosphate. It carries out the reaction GMP + diphosphate = guanine + 5-phospho-alpha-D-ribose 1-diphosphate. The protein operates within purine metabolism; IMP biosynthesis via salvage pathway; IMP from hypoxanthine: step 1/1. Functionally, catalyzes a salvage reaction resulting in the formation of IMP that is energically less costly than de novo synthesis. The protein is Hypoxanthine/guanine phosphoribosyltransferase of Methanococcus vannielii (strain ATCC 35089 / DSM 1224 / JCM 13029 / OCM 148 / SB).